A 167-amino-acid chain; its full sequence is CDP-archaeol synthase (167 aa).

The next 5 membrane-spanning stretches (helical) occupy residues 4–24 (ILEAFWYILPAYFANSSPVIL), 51–71 (GFLGGLTVGTLIGVIQQIIYP), 80–100 (FKVSFLLALGALVGDLIGSFI), 104–124 (LNLPPGYPAVGLDQWGFLISA), and 139–158 (VLLLLVVTPLIHWGTNVLAY).

The protein belongs to the CDP-archaeol synthase family. Mg(2+) serves as cofactor.

It localises to the cell membrane. The enzyme catalyses 2,3-bis-O-(geranylgeranyl)-sn-glycerol 1-phosphate + CTP + H(+) = CDP-2,3-bis-O-(geranylgeranyl)-sn-glycerol + diphosphate. The protein operates within membrane lipid metabolism; glycerophospholipid metabolism. In terms of biological role, catalyzes the formation of CDP-2,3-bis-(O-geranylgeranyl)-sn-glycerol (CDP-archaeol) from 2,3-bis-(O-geranylgeranyl)-sn-glycerol 1-phosphate (DGGGP) and CTP. This reaction is the third ether-bond-formation step in the biosynthesis of archaeal membrane lipids. The sequence is that of CDP-archaeol synthase from Pyrococcus furiosus (strain ATCC 43587 / DSM 3638 / JCM 8422 / Vc1).